The following is a 545-amino-acid chain: ATP synthase subunit alpha (545 aa).

174 to 181 (GDRKTGKT) contributes to the ATP binding site.

Belongs to the ATPase alpha/beta chains family. As to quaternary structure, F-type ATPases have 2 components, CF(1) - the catalytic core - and CF(0) - the membrane proton channel. CF(1) has five subunits: alpha(3), beta(3), gamma(1), delta(1), epsilon(1). CF(0) has three main subunits: a(1), b(2) and c(9-12). The alpha and beta chains form an alternating ring which encloses part of the gamma chain. CF(1) is attached to CF(0) by a central stalk formed by the gamma and epsilon chains, while a peripheral stalk is formed by the delta and b chains.

It is found in the cell membrane. The enzyme catalyses ATP + H2O + 4 H(+)(in) = ADP + phosphate + 5 H(+)(out). In terms of biological role, produces ATP from ADP in the presence of a proton gradient across the membrane. The alpha chain is a regulatory subunit. The chain is ATP synthase subunit alpha from Cutibacterium acnes (strain DSM 16379 / KPA171202) (Propionibacterium acnes).